A 502-amino-acid polypeptide reads, in one-letter code: Packaging protein 1 (502 aa).

The interval 99 to 122 (EAMEGQNPTCSRHESAYPIQSQVS) is disordered. Residue 226–233 (GPTGCGKS) coordinates ATP. The segment at 495–502 (RYYHSKKK) is DNA-binding.

The protein belongs to the adenoviridae packaging protein 1 family. As to quaternary structure, homodimer. Part of a genome packaging complex composed of packaging proteins 1, 2 and 3; this complex specifically binds to the packaging sequence on the left end of viral genomic DNA and performs packaging of the viral genome. Interacts with protein 33K.

It localises to the virion. Its subcellular location is the host nucleus. It is found in the host nucleoplasm. The protein localises to the host nucleolus. Its function is as follows. Component of the packaging machinery which encapsidates the viral DNA into preformed capsids and transcriptional activator of the viral major late promoter (MLP). Binds, along with packaging proteins 2 and 3, to the specific packaging sequence on the left end of viral genomic DNA and displays ATPase activity thereby providing the power stroke of the packaging machinery. The activity of packaging protein IVa2 is stimulated by protein 33K which acts as a terminase. May be the protein that pumps DNA into the capsid powered by ATP hydrolysis. Specifically binds to the 5'-CG-3' nucleotides of the repeats making up the packaging sequence. Component of the DEF-A and DEF-B transcription factors that bind downstream elements of the major late promoter (MLP), and stimulate transcription from the MLP after initiation of viral DNA replication. DEF-A is a heterodimer packaging proteins 1 and 2 and DEF-B is a homodimer of packaging protein 1. The polypeptide is Packaging protein 1 (Canis lupus familiaris (Dog)).